The primary structure comprises 136 residues: uncharacterized protein (136 aa).

Its subcellular location is the cytoplasm. It localises to the nucleus. This is an uncharacterized protein from Schizosaccharomyces pombe (strain 972 / ATCC 24843) (Fission yeast).